The following is a 506-amino-acid chain: Cationic amino acid transporter 8 (506 aa).

N-linked (GlcNAc...) asparagine glycans are attached at residues Asn-2 and Asn-5. Residues 38–58 (FYLLLIIIIYTATSACIYFDW) traverse the membrane as a helical segment. An N-linked (GlcNAc...) asparagine glycan is attached at Asn-75. 5 consecutive transmembrane segments (helical) span residues 93-113 (NLYP…GFLY), 116-136 (IGPK…WIFL), 147-167 (LIGF…ILTV), 174-194 (ISTF…AVPA), and 211-231 (ICYG…TFLL). An N-linked (GlcNAc...) asparagine glycan is attached at Asn-277. Residues 302-322 (ILLFFKVLLSYPSICIIVYFI) form a helical membrane-spanning segment. Residues Asn-325 and Asn-342 are each glycosylated (N-linked (GlcNAc...) asparagine). The next 4 helical transmembrane spans lie at 344-364 (SIIN…IIFG), 372-392 (AAII…TALI), 399-419 (LISA…IYCF), and 427-447 (VVFG…SLFC). N-linked (GlcNAc...) asparagine glycans are attached at residues Asn-453 and Asn-456. The chain crosses the membrane as a helical span at residues 466-486 (TISILLAISFIIMFLPLSILY).

This sequence belongs to the SLC43A transporter (TC 2.A.1.44) family.

It localises to the cell membrane. Cationic amino acid transporter which transports L-arginine, L-lysine and, to a lesser extent, L-histidine and ornithine. Plays an essential role in gametogenesis. The protein is Cationic amino acid transporter 8 of Plasmodium berghei (strain Anka).